The sequence spans 476 residues: Casein kinase 1-like protein 7 (476 aa).

The Protein kinase domain occupies 9 to 278; it reads FKLGKKIGSG…LKRLFRDLFI (270 aa). Residues 15–23 and Lys38 contribute to the ATP site; that span reads IGSGSFGEL. Residue Asp128 is the Proton acceptor of the active site. 2 disordered regions span residues 299–324 and 340–464; these read GSSSGSSSRTRHHTTAKPGFNADPIE and PGAV…TRED. Positions 357 to 367 are enriched in basic and acidic residues; it reads PRDRSRSRNSD. Over residues 382–422 the composition is skewed to low complexity; the sequence is ANSSSRYRASSSRKAVAASSSRPSSAGGPSESRTSSRLVSS. The span at 423 to 432 shows a compositional bias: gly residues; it reads SGGGGSGSGN.

The protein belongs to the protein kinase superfamily. CK1 Ser/Thr protein kinase family. Casein kinase I subfamily. In terms of assembly, monomer. In terms of processing, autophosphorylated.

It is found in the cytoplasm. The enzyme catalyses L-seryl-[protein] + ATP = O-phospho-L-seryl-[protein] + ADP + H(+). It carries out the reaction L-threonyl-[protein] + ATP = O-phospho-L-threonyl-[protein] + ADP + H(+). Its function is as follows. Casein kinases are operationally defined by their preferential utilization of acidic proteins such as caseins as substrates. It can phosphorylate a large number of proteins. The chain is Casein kinase 1-like protein 7 from Arabidopsis thaliana (Mouse-ear cress).